The chain runs to 653 residues: Fructose-1,6-bisphosphatase class 3 (653 aa).

The protein belongs to the FBPase class 3 family. It depends on Mn(2+) as a cofactor.

It carries out the reaction beta-D-fructose 1,6-bisphosphate + H2O = beta-D-fructose 6-phosphate + phosphate. It functions in the pathway carbohydrate biosynthesis; gluconeogenesis. This is Fructose-1,6-bisphosphatase class 3 from Listeria innocua serovar 6a (strain ATCC BAA-680 / CLIP 11262).